The primary structure comprises 386 residues: S-adenosylmethionine synthase (386 aa).

ATP is bound at residue His16. Residue Asp18 participates in Mg(2+) binding. A K(+)-binding site is contributed by Glu44. L-methionine contacts are provided by Glu57 and Gln100. The segment at 100-110 (QSPDINQGVDR) is flexible loop. ATP-binding positions include 164–166 (DGK), 230–231 (KF), Asp239, 245–246 (RK), Ala262, and Lys266. Asp239 serves as a coordination point for L-methionine. Lys270 is an L-methionine binding site.

This sequence belongs to the AdoMet synthase family. Homotetramer; dimer of dimers. Mg(2+) is required as a cofactor. Requires K(+) as cofactor.

It localises to the cytoplasm. The catalysed reaction is L-methionine + ATP + H2O = S-adenosyl-L-methionine + phosphate + diphosphate. It participates in amino-acid biosynthesis; S-adenosyl-L-methionine biosynthesis; S-adenosyl-L-methionine from L-methionine: step 1/1. In terms of biological role, catalyzes the formation of S-adenosylmethionine (AdoMet) from methionine and ATP. The overall synthetic reaction is composed of two sequential steps, AdoMet formation and the subsequent tripolyphosphate hydrolysis which occurs prior to release of AdoMet from the enzyme. In Helicobacter hepaticus (strain ATCC 51449 / 3B1), this protein is S-adenosylmethionine synthase.